Consider the following 339-residue polypeptide: Trace amine-associated receptor 2 (339 aa).

At 1-36 (MTSFEAQQETFDCSEYGNGSCPENERSLGVRAAMYS) the chain is on the extracellular side. Residue Asn-18 is glycosylated (N-linked (GlcNAc...) asparagine). 2 disulfides stabilise this stretch: Cys-21–Cys-185 and Cys-104–Cys-189. Residues 37-57 (LMAGAIFITIFGNLVMIISIS) traverse the membrane as a helical segment. Topologically, residues 58-67 (YFKQLHTPTN) are cytoplasmic. The helical transmembrane segment at 68-88 (LLILSMAVTDFLLGFTIMPYS) threads the bilayer. Residues 89-106 (MVRSVENCWYFGLTFCKI) lie on the Extracellular side of the membrane. Residues 107-127 (HYSFDLMLSITSIFHLCSVAI) form a helical membrane-spanning segment. The Cytoplasmic segment spans residues 128 to 150 (DRFYAICHPLHYCTKMTIPVVKR). Residues 151 to 171 (LLLVCWSVPGAFAFGVVFSEA) form a helical membrane-spanning segment. Topologically, residues 172–195 (YADGIEGYDILVACSSSCPVMFNK) are extracellular. A helical membrane pass occupies residues 196-216 (LWGTTLFVAGFFTPSSMMVGI). Residues 217-251 (YGKIFAVSKKHARVIDNLPENQNNQMRKDKKAAKT) lie on the Cytoplasmic side of the membrane. A helical transmembrane segment spans residues 252–272 (LGIVMGVFLLCWFPCFFTILL). Over 273-287 (DPFLNFSTPAILFDA) the chain is Extracellular. N-linked (GlcNAc...) asparagine glycosylation is present at Asn-277. A helical transmembrane segment spans residues 288–310 (LTWFGYFNSTCNPLIYGFFYPWF). At 311–339 (RRALRYILLGKIFSSHFHNTNLFTQKETE) the chain is on the cytoplasmic side.

The protein belongs to the G-protein coupled receptor 1 family.

Its subcellular location is the cell membrane. Functionally, orphan olfactory receptor specific for trace amines. Trace amine compounds are enriched in animal body fluids and act on trace amine-associated receptors (TAARs) to elicit both intraspecific and interspecific innate behaviors. Ligand-binding causes a conformation change that triggers signaling via the G(s)-class of G-proteins which activate adenylate cyclase. May also be required to provide olfactory input into limbic brain areas to regulate emotional behaviors likely via modulation of the dopamine system. This chain is Trace amine-associated receptor 2 (Taar2), found in Rattus norvegicus (Rat).